The following is a 512-amino-acid chain: V-type proton ATPase subunit B (512 aa).

Arginine 381 provides a ligand contact to ATP. The interval 484–512 is disordered; it reads LYGRDREQDDDEDEDEEDPDKSGDKLIDA. A compositionally biased stretch (acidic residues) spans 491–502; that stretch reads QDDDEDEDEEDP. The segment covering 503-512 has biased composition (basic and acidic residues); the sequence is DKSGDKLIDA.

This sequence belongs to the ATPase alpha/beta chains family. As to quaternary structure, V-ATPase is a heteromultimeric enzyme composed of a peripheral catalytic V1 complex (components A to H) attached to an integral membrane V0 proton pore complex (components: a, c, c', c'', d, e, f and VOA1).

The protein resides in the vacuole membrane. Functionally, non-catalytic subunit of the V1 complex of vacuolar(H+)-ATPase (V-ATPase), a multisubunit enzyme composed of a peripheral complex (V1) that hydrolyzes ATP and a membrane integral complex (V0) that translocates protons. Plays an important role in resistance to several stresses, as well as in autophagy and virulence. In Candida albicans (strain SC5314 / ATCC MYA-2876) (Yeast), this protein is V-type proton ATPase subunit B.